A 709-amino-acid chain; its full sequence is Phosphoribosylformylglycinamidine synthase subunit PurL (709 aa).

Histidine 36 is an active-site residue. Residues tyrosine 39 and lysine 80 each contribute to the ATP site. Glutamate 82 contributes to the Mg(2+) binding site. Substrate is bound by residues 83–86 (SHNH) and arginine 105. The active-site Proton acceptor is histidine 84. Aspartate 106 is a Mg(2+) binding site. Substrate is bound at residue glutamine 226. Position 252 (aspartate 252) interacts with Mg(2+). 294–296 (ETQ) serves as a coordination point for substrate. ATP-binding residues include aspartate 470 and glycine 507. Serine 510 contacts substrate.

It belongs to the FGAMS family. In terms of assembly, monomer. Part of the FGAM synthase complex composed of 1 PurL, 1 PurQ and 2 PurS subunits.

The protein localises to the cytoplasm. It carries out the reaction N(2)-formyl-N(1)-(5-phospho-beta-D-ribosyl)glycinamide + L-glutamine + ATP + H2O = 2-formamido-N(1)-(5-O-phospho-beta-D-ribosyl)acetamidine + L-glutamate + ADP + phosphate + H(+). Its pathway is purine metabolism; IMP biosynthesis via de novo pathway; 5-amino-1-(5-phospho-D-ribosyl)imidazole from N(2)-formyl-N(1)-(5-phospho-D-ribosyl)glycinamide: step 1/2. In terms of biological role, part of the phosphoribosylformylglycinamidine synthase complex involved in the purines biosynthetic pathway. Catalyzes the ATP-dependent conversion of formylglycinamide ribonucleotide (FGAR) and glutamine to yield formylglycinamidine ribonucleotide (FGAM) and glutamate. The FGAM synthase complex is composed of three subunits. PurQ produces an ammonia molecule by converting glutamine to glutamate. PurL transfers the ammonia molecule to FGAR to form FGAM in an ATP-dependent manner. PurS interacts with PurQ and PurL and is thought to assist in the transfer of the ammonia molecule from PurQ to PurL. The chain is Phosphoribosylformylglycinamidine synthase subunit PurL from Saccharolobus solfataricus (strain ATCC 35092 / DSM 1617 / JCM 11322 / P2) (Sulfolobus solfataricus).